A 283-amino-acid polypeptide reads, in one-letter code: Thymidylate synthase (283 aa).

Residue R22 participates in dUMP binding. C160 acts as the Nucleophile in catalysis. Residues 180–183 (RSCD), N191, and 221–223 (HIY) contribute to the dUMP site. D183 serves as a coordination point for (6R)-5,10-methylene-5,6,7,8-tetrahydrofolate. S282 serves as a coordination point for (6R)-5,10-methylene-5,6,7,8-tetrahydrofolate.

The protein belongs to the thymidylate synthase family. Bacterial-type ThyA subfamily. In terms of assembly, homodimer.

The protein localises to the cytoplasm. The catalysed reaction is dUMP + (6R)-5,10-methylene-5,6,7,8-tetrahydrofolate = 7,8-dihydrofolate + dTMP. The protein operates within pyrimidine metabolism; dTTP biosynthesis. Its function is as follows. Catalyzes the reductive methylation of 2'-deoxyuridine-5'-monophosphate (dUMP) to 2'-deoxythymidine-5'-monophosphate (dTMP) while utilizing 5,10-methylenetetrahydrofolate (mTHF) as the methyl donor and reductant in the reaction, yielding dihydrofolate (DHF) as a by-product. This enzymatic reaction provides an intracellular de novo source of dTMP, an essential precursor for DNA biosynthesis. The protein is Thymidylate synthase of Vibrio vulnificus (strain CMCP6).